Reading from the N-terminus, the 207-residue chain is MFFVTPAYAEEAPAAATGTDAHAAPAAGEVHTETGVAEGEHARGPFPPFDSTTYASQLLWLVITFSVFYLLMQKVIAPRIGAILDQRHTRISQDLEEAGRLKAEADAAVQTYEGELAAARAKSNAIGSAARDAAKAKAEEDRRAVEASLSEKIKAAEVRIADIKAKAFADVGTIAEETAAAVVEQLIGGTAAQADVAAAVAAAKKEA.

Residues 53–72 (TYASQLLWLVITFSVFYLLM) form a helical membrane-spanning segment.

It belongs to the ATPase B chain family. In terms of assembly, F-type ATPases have 2 components, F(1) - the catalytic core - and F(0) - the membrane proton channel. F(1) has five subunits: alpha(3), beta(3), gamma(1), delta(1), epsilon(1). F(0) has three main subunits: a(1), b(2) and c(10-14). The alpha and beta chains form an alternating ring which encloses part of the gamma chain. F(1) is attached to F(0) by a central stalk formed by the gamma and epsilon chains, while a peripheral stalk is formed by the delta and b chains.

The protein resides in the cell inner membrane. Its function is as follows. F(1)F(0) ATP synthase produces ATP from ADP in the presence of a proton or sodium gradient. F-type ATPases consist of two structural domains, F(1) containing the extramembraneous catalytic core and F(0) containing the membrane proton channel, linked together by a central stalk and a peripheral stalk. During catalysis, ATP synthesis in the catalytic domain of F(1) is coupled via a rotary mechanism of the central stalk subunits to proton translocation. Functionally, component of the F(0) channel, it forms part of the peripheral stalk, linking F(1) to F(0). The b'-subunit is a diverged and duplicated form of b found in plants and photosynthetic bacteria. The protein is ATP synthase subunit b 2 (atpF2) of Rhizobium etli (strain CIAT 652).